The following is a 314-amino-acid chain: tRNA dimethylallyltransferase (314 aa).

ATP is bound at residue 12–19 (GPTASGKT). Residue 14-19 (TASGKT) coordinates substrate. 2 interaction with substrate tRNA regions span residues 37–40 (DSAL) and 162–166 (QRIIR).

The protein belongs to the IPP transferase family. In terms of assembly, monomer. Requires Mg(2+) as cofactor.

It carries out the reaction adenosine(37) in tRNA + dimethylallyl diphosphate = N(6)-dimethylallyladenosine(37) in tRNA + diphosphate. Catalyzes the transfer of a dimethylallyl group onto the adenine at position 37 in tRNAs that read codons beginning with uridine, leading to the formation of N6-(dimethylallyl)adenosine (i(6)A). This Acinetobacter baumannii (strain AB0057) protein is tRNA dimethylallyltransferase.